The sequence spans 293 residues: tRNA pseudouridine synthase B (293 aa).

D39 serves as the catalytic Nucleophile.

This sequence belongs to the pseudouridine synthase TruB family. Type 1 subfamily.

The enzyme catalyses uridine(55) in tRNA = pseudouridine(55) in tRNA. Responsible for synthesis of pseudouridine from uracil-55 in the psi GC loop of transfer RNAs. The protein is tRNA pseudouridine synthase B of Streptococcus thermophilus (strain ATCC BAA-250 / LMG 18311).